The primary structure comprises 251 residues: Ly6/PLAUR domain-containing protein 5 (251 aa).

The signal sequence occupies residues 1–25 (MAMGVPRVILLCLFGAALCLTGSQA). Asn-120 and Asn-174 each carry an N-linked (GlcNAc...) asparagine glycan. A UPAR/Ly6 domain is found at 135 to 214 (CYACIGVHQD…GSCCEGYLCN (80 aa)). The GPI-anchor amidated alanine moiety is linked to residue Ala-225. The propeptide at 226 to 251 (SATTPPRALQVLALLLPVLLLVGLSA) is removed in mature form.

It is found in the cell membrane. In Homo sapiens (Human), this protein is Ly6/PLAUR domain-containing protein 5 (LYPD5).